We begin with the raw amino-acid sequence, 154 residues long: Telokin (154 aa).

A disordered region spans residues isoleucine 1–glutamate 24. Residues serine 10–asparagine 19 are compositionally biased toward polar residues. The Ig-like C2-type domain occupies proline 42–glutamate 133. The tract at residues threonine 134–glutamate 154 is disordered. Over residues glycine 141–glutamate 154 the composition is skewed to acidic residues.

It belongs to the protein kinase superfamily. CAMK Ser/Thr protein kinase family. As to quaternary structure, binds calmodulin.

Its function is as follows. Corresponds to the C-terminus of smooth muscle myosin light chain kinase. The chain is Telokin from Meleagris gallopavo (Wild turkey).